Here is a 371-residue protein sequence, read N- to C-terminus: Fructose-1,6-bisphosphatase class 1 1 (371 aa).

The Mg(2+) site is built by E115, D134, L136, and D137. Substrate-binding positions include 137 to 140 (DGSS), N228, and 280 to 282 (YLY). E300 provides a ligand contact to Mg(2+).

It belongs to the FBPase class 1 family. As to quaternary structure, homotetramer. The cofactor is Mg(2+).

The protein resides in the cytoplasm. It carries out the reaction beta-D-fructose 1,6-bisphosphate + H2O = beta-D-fructose 6-phosphate + phosphate. Its pathway is carbohydrate biosynthesis; gluconeogenesis. The polypeptide is Fructose-1,6-bisphosphatase class 1 1 (Xanthobacter autotrophicus (strain ATCC BAA-1158 / Py2)).